Consider the following 259-residue polypeptide: Thiazole synthase (259 aa).

Residue Lys99 is the Schiff-base intermediate with DXP of the active site. Residues Gly161, Ala187–Gly188, and Asn209–Thr210 each bind 1-deoxy-D-xylulose 5-phosphate.

Belongs to the ThiG family. As to quaternary structure, homotetramer. Forms heterodimers with either ThiH or ThiS.

It localises to the cytoplasm. It catalyses the reaction [ThiS sulfur-carrier protein]-C-terminal-Gly-aminoethanethioate + 2-iminoacetate + 1-deoxy-D-xylulose 5-phosphate = [ThiS sulfur-carrier protein]-C-terminal Gly-Gly + 2-[(2R,5Z)-2-carboxy-4-methylthiazol-5(2H)-ylidene]ethyl phosphate + 2 H2O + H(+). The protein operates within cofactor biosynthesis; thiamine diphosphate biosynthesis. Catalyzes the rearrangement of 1-deoxy-D-xylulose 5-phosphate (DXP) to produce the thiazole phosphate moiety of thiamine. Sulfur is provided by the thiocarboxylate moiety of the carrier protein ThiS. In vitro, sulfur can be provided by H(2)S. This chain is Thiazole synthase, found in Nitratiruptor sp. (strain SB155-2).